Consider the following 2363-residue polypeptide: Highly reducing polyketide synthase cnsI (2363 aa).

Residues 14-440 (PEPIAIIGMS…GSNAHAIVES (427 aa)) form the Ketosynthase family 3 (KS3) domain. Residues C187, H322, and H363 each act as for beta-ketoacyl synthase activity in the active site. Positions 546 to 854 (LAFVFTGQGA…FLQVLKSINA (309 aa)) are malonyl-CoA:ACP transacylase (MAT) domain. Catalysis depends on S638, which acts as the For malonyltransferase activity. Residues 938–1068 (HDLLGSPMDF…GTFTLHYDAR (131 aa)) form an N-terminal hotdog fold region. The dehydratase (DH) domain stretch occupies residues 938–1224 (HDLLGSPMDF…RLDSIASDVS (287 aa)). The PKS/mFAS DH domain maps to 938–1246 (HDLLGSPMDF…LGPVPMSKVP (309 aa)). H970 serves as the catalytic Proton acceptor; for dehydratase activity. The tract at residues 1089–1246 (TAECETNRDA…LGPVPMSKVP (158 aa)) is C-terminal hotdog fold. The active-site Proton donor; for dehydratase activity is the D1159. An enoylreductase (ER) domain region spans residues 1669–1976 (GGQWVEDRQL…ARQTGISVAI (308 aa)). Positions 2001–2177 (TYLLAGGLGM…PGHSIDIGLV (177 aa)) are catalytic ketoreductase (KRc) domain. In terms of domain architecture, Carrier spans 2279–2357 (EDASYVVNQA…VLSEKIAAQS (79 aa)). Residue S2317 is modified to O-(pantetheine 4'-phosphoryl)serine.

Its pathway is alkaloid biosynthesis. Highly reducing polyketide synthase; part of the gene cluster that mediates the biosynthesis of communesins, a prominent class of indole alkaloids with great potential as pharmaceuticals. Communesins are biosynthesized by the coupling of tryptamine and aurantioclavine, two building blocks derived from L-tryptophan. The L-tryptophan decarboxylase cnsB converts L-tryptophan to tryptamine, whereas the tryptophan dimethylallyltransferase cnsF converts L-tryptophan to 4-dimethylallyl tryptophan which is further transformed to aurantioclavine by the aurantioclavine synthase cnsA, probably aided by the catalase cnsD. The cytochrome P450 monooxygenase cnsC catalyzes the heterodimeric coupling between the two different indole moieties, tryptamine and aurantioclavine, to construct vicinal quaternary stereocenters and yield the heptacyclic communesin scaffold. The O-methyltransferase cnsE then methylates the communesin scaffold to produce communesin K, the simplest characterized communesin that contains the heptacyclic core. The dioxygenase cnsJ converts communesin K into communesin I. Acylation to introduce the hexadienyl group at position N16 of communesin I by the acyltransferase cnsK leads to the production of communesin B. The hexadienyl group is produced by the highly reducing polyketide synthase cnsI, before being hydrolytically removed from cnsI by the serine hydrolase cnsH, converted into hexadienyl-CoA by the CoA ligase cnsG, and then transferred to communesin I by cnsK. Surprisingly, cnsK may also be a promiscuous acyltransferase that can tolerate a range of acyl groups, including acetyl-, propionyl-, and butyryl-CoA, which lead to communesins A, G and H respectively. The roles of the alpha-ketoglutarate-dependent dioxygenases cnsM and cnsP have still to be determined. This is Highly reducing polyketide synthase cnsI from Penicillium expansum (Blue mold rot fungus).